The primary structure comprises 480 residues: Probable efflux pump outer membrane protein SepC (480 aa).

Positions 1-16 are cleaved as a signal peptide; that stretch reads MKTHYLSIALSVALSG. Cysteine 17 is lipidated: N-palmitoyl cysteine. Cysteine 17 carries the S-diacylglycerol cysteine lipid modification.

It belongs to the outer membrane factor (OMF) (TC 1.B.17) family.

The protein resides in the cell outer membrane. Functionally, probable outer membrane component of the SepABC efflux pump with unknown specificity. The protein is Probable efflux pump outer membrane protein SepC (sepC) of Pseudomonas putida (strain ATCC 700007 / DSM 6899 / JCM 31910 / BCRC 17059 / LMG 24140 / F1).